The following is a 98-amino-acid chain: Peptides MS9.1 (98 aa).

An N-terminal signal peptide occupies residues 1–21 (MKQSLILAVLCLALVFATIEA). Residues 22-27 (KPKADP) constitute a propeptide that is removed on maturation. 2 cysteine pairs are disulfide-bonded: C34/C46 and C37/C52. 2 propeptides span residues 63–64 (DP) and 92–98 (DPVRDAE).

Belongs to the sea anemone BBH family.

It is found in the secreted. The protein resides in the nematocyst. In terms of biological role, acts as a positive modulator of mammalian TRPA1, a non-selective cation channel involved in detection of pain, in vitro yet has an analgesic and anti-inflammatory effect in vivo. This chain is Peptides MS9.1, found in Metridium senile (Brown sea anemone).